A 179-amino-acid chain; its full sequence is NAD(P)H-quinone oxidoreductase subunit I, chloroplastic (179 aa).

4Fe-4S ferredoxin-type domains follow at residues 55–84 and 95–124; these read GRIH…VDWR and LNYS…MTEE. Cys-64, Cys-67, Cys-70, Cys-74, Cys-104, Cys-107, Cys-110, and Cys-114 together coordinate [4Fe-4S] cluster.

The protein belongs to the complex I 23 kDa subunit family. In terms of assembly, NDH is composed of at least 16 different subunits, 5 of which are encoded in the nucleus. [4Fe-4S] cluster is required as a cofactor.

It is found in the plastid. Its subcellular location is the chloroplast thylakoid membrane. It catalyses the reaction a plastoquinone + NADH + (n+1) H(+)(in) = a plastoquinol + NAD(+) + n H(+)(out). The enzyme catalyses a plastoquinone + NADPH + (n+1) H(+)(in) = a plastoquinol + NADP(+) + n H(+)(out). NDH shuttles electrons from NAD(P)H:plastoquinone, via FMN and iron-sulfur (Fe-S) centers, to quinones in the photosynthetic chain and possibly in a chloroplast respiratory chain. The immediate electron acceptor for the enzyme in this species is believed to be plastoquinone. Couples the redox reaction to proton translocation, and thus conserves the redox energy in a proton gradient. In Acorus calamus (Sweet flag), this protein is NAD(P)H-quinone oxidoreductase subunit I, chloroplastic.